Reading from the N-terminus, the 156-residue chain is Ribosome maturation factor RimP (156 aa).

It belongs to the RimP family.

It is found in the cytoplasm. In terms of biological role, required for maturation of 30S ribosomal subunits. This Exiguobacterium sp. (strain ATCC BAA-1283 / AT1b) protein is Ribosome maturation factor RimP.